The chain runs to 154 residues: Large ribosomal subunit protein uL22c (154 aa).

The protein belongs to the universal ribosomal protein uL22 family. As to quaternary structure, part of the 50S ribosomal subunit.

The protein localises to the plastid. It localises to the chloroplast. This protein binds specifically to 23S rRNA. Functionally, the globular domain of the protein is located near the polypeptide exit tunnel on the outside of the subunit, while an extended beta-hairpin is found that lines the wall of the exit tunnel in the center of the 70S ribosome. This Jasminum nudiflorum (Winter jasmine) protein is Large ribosomal subunit protein uL22c (rpl22).